The primary structure comprises 69 residues: Small, acid-soluble spore protein I (69 aa).

The protein belongs to the SspI family.

It localises to the spore core. The protein is Small, acid-soluble spore protein I of Bacillus cereus (strain G9842).